The primary structure comprises 132 residues: Salivary protein 15 Iper-2 (132 aa).

A signal peptide spans 1 to 18 (MKVVCIIVLFVIVAVNES). 5 N-linked (GlcNAc...) asparagine glycosylation sites follow: asparagine 24, asparagine 36, asparagine 62, asparagine 89, and asparagine 101. Residues 113-132 (GPNGQTCADKSQCVGHIPGC) form a CD4-binding region.

It belongs to the salp15 family. Interacts with host CD4. Interacts with host DC-SIGN (CD209). As to quaternary structure, (Microbial infection) Interacts with Borrelia outer surface protein C (OspC). In terms of tissue distribution, expressed in salivary glands from feeding female ticks. Highly expressed 1 day after start of feeding, and weakly expressed at the initiation of feeding and 4 days after start of feeding.

It is found in the secreted. Its function is as follows. Salivary tick protein that downregulates host immune system by binding to both dendritic cells, and CD4(+) T cells. Specifically binds to the CD4 coreceptor on T cells. This interaction prevents the activation of the Src kinase, Lck, and its downstream substrate Zap-70, and results in deficient activation of PLCgamma1, the repression of calcium fluxes triggered by T-cell antigen receptor (TCR) ligation, and a subsequent reduction in interleukin-2 production. This salivary protein also binds to DC-SIGN (CD209) on dendritic cells (DC) and activates the Raf-1 kinase/MEK signaling pathway that results in down-regulating expression of pro-inflammatory cytokines. Furthermore, it inhibits T cell proliferation induced by DCs. It also inhibits in vitro keratinocyte inflammation induced by Borrelia burgdorferi or by the major outer surface protein (OspC) of Borrelia. In addition, it downregulates chemokines and monocyte chemoattractant protein 1, as well as several antimicrobial peptides such as defensins, cathelicidin, psoriasin, and RNase 7. Apart from its immunomodulatory activities, it is also associated with protection of Borrelia spirochetes from antibody-mediated killing through its binding to OspC. In vivo, tests on different immune disease animal models show promising therapeutic results, e.g., in inhibiting HIV infection, experimental autoimmune encephalomyelitis, transplantation rejection, and asthma. In terms of biological role, (Microbial infection) Protects Borrelia garinii from anti-Borrelia antibody-mediated cytotoxicity in vitro. May facilitate B.garinii transmission in mouse model. (Microbial infection) Protects Borrelia burgdorferi from anti-Borrelia antibody-mediated cytotoxicity in vitro. Functionally, (Microbial infection) Protects Borrelia afzelii from anti-Borrelia antibody-mediated cytotoxicity in vitro. The protein is Salivary protein 15 Iper-2 of Ixodes persulcatus (Taiga tick).